A 275-amino-acid polypeptide reads, in one-letter code: Large ribosomal subunit protein uL2c (275 aa).

Residues 225–252 (MNPCDHPHGGGEGRSPIGRAKPVTPWGK) form a disordered region.

It belongs to the universal ribosomal protein uL2 family. In terms of assembly, part of the 50S ribosomal subunit.

The protein localises to the plastid. The protein resides in the chloroplast. The chain is Large ribosomal subunit protein uL2c (rpl2) from Guillardia theta (Cryptophyte).